Consider the following 239-residue polypeptide: Uridylate kinase (239 aa).

An ATP-binding site is contributed by 13–16; it reads KVSG. A UMP-binding site is contributed by Gly-55. The ATP site is built by Gly-56 and Arg-60. Residues Asp-75 and 136 to 143 contribute to the UMP site; that span reads TGNPFFTT. ATP is bound by residues Thr-163, Gln-164, Tyr-169, and Asp-172.

Belongs to the UMP kinase family. In terms of assembly, homohexamer.

The protein localises to the cytoplasm. It catalyses the reaction UMP + ATP = UDP + ADP. It functions in the pathway pyrimidine metabolism; CTP biosynthesis via de novo pathway; UDP from UMP (UMPK route): step 1/1. Its activity is regulated as follows. Inhibited by UTP. Catalyzes the reversible phosphorylation of UMP to UDP. The polypeptide is Uridylate kinase (Bartonella quintana (strain Toulouse) (Rochalimaea quintana)).